Reading from the N-terminus, the 80-residue chain is ATP synthase subunit c (80 aa).

The next 2 membrane-spanning stretches (helical) occupy residues 8-28 and 55-75; these read MIYFAAAIMLGMAAVGAAIGI and IVMGLVDAIPMIVVGMALYLI.

It belongs to the ATPase C chain family. F-type ATPases have 2 components, F(1) - the catalytic core - and F(0) - the membrane proton channel. F(1) has five subunits: alpha(3), beta(3), gamma(1), delta(1), epsilon(1). F(0) has three main subunits: a(1), b(2) and c(10-14). The alpha and beta chains form an alternating ring which encloses part of the gamma chain. F(1) is attached to F(0) by a central stalk formed by the gamma and epsilon chains, while a peripheral stalk is formed by the delta and b chains.

It is found in the cell inner membrane. Its function is as follows. F(1)F(0) ATP synthase produces ATP from ADP in the presence of a proton or sodium gradient. F-type ATPases consist of two structural domains, F(1) containing the extramembraneous catalytic core and F(0) containing the membrane proton channel, linked together by a central stalk and a peripheral stalk. During catalysis, ATP synthesis in the catalytic domain of F(1) is coupled via a rotary mechanism of the central stalk subunits to proton translocation. In terms of biological role, key component of the F(0) channel; it plays a direct role in translocation across the membrane. A homomeric c-ring of between 10-14 subunits forms the central stalk rotor element with the F(1) delta and epsilon subunits. The sequence is that of ATP synthase subunit c from Aeromonas salmonicida (strain A449).